The primary structure comprises 1043 residues: BAG family molecular chaperone regulator 6 (1043 aa).

Disordered regions lie at residues 253 to 294, 311 to 331, 343 to 366, 410 to 500, and 533 to 566; these read KEEL…GKTV, DVKE…PYPI, VEAS…SDLH, NIPV…AESR, and SVES…KKSF. Basic and acidic residues-rich tracts occupy residues 311 to 324, 343 to 357, 416 to 443, and 478 to 487; these read DVKE…KEEP, VEAS…EGRN, SENH…KKEQ, and KRMEKSKETK. A compositionally biased stretch (polar residues) spans 534–543; sequence VESNSNLQEE. A compositionally biased stretch (basic and acidic residues) spans 550–566; it reads KPCEAKENREQPAKKSF. Residues 568–597 form the IQ domain; sequence EEEAARIIQSMYRGYDVRRWEPIKKLKEIA. Residues 595 to 672 form the BAG domain; sequence EIATVREQMG…SIQDKLDSLK (78 aa). Residues 724–741 show a composition bias toward basic and acidic residues; the sequence is SPEEHPMSVLNRTDEKQA. 4 disordered regions span residues 724–749, 764–799, 817–975, and 1015–1043; these read SPEE…ETEE, ATEN…GNGM, EPIN…ISKE, and EKKL…DAVL. The span at 840–852 shows a compositional bias: low complexity; it reads ASEVSEAETNSSE. Positions 853–871 are enriched in basic and acidic residues; the sequence is NENRKGEDDIVLHSEKNVE. Composition is skewed to polar residues over residues 885 to 899 and 919 to 932; these read QPLS…TREG and SPNN…QTSE. Basic and acidic residues predominate over residues 934–951; the sequence is QDEKEQSPETEVIVKEQP. The stretch at 971-1024 forms a coiled coil; sequence GISKETKKLMEENQRFKETMETLVKAGREQLEVISKLTSRVKSLEKKLSHKKKT. Over residues 1018–1031 the composition is skewed to basic residues; that stretch reads LSHKKKTQIRRRAS. A compositionally biased stretch (polar residues) spans 1034–1043; sequence MSVSPTDAVL.

In terms of assembly, binds to the ATPase domain of HSP70/HSC70 chaperones. Interacts with calmodulins CAM1, CAM2, CAM3, CAM4, CAM6 and CAM7. Interacts with BAGP1 and APCB1. As to expression, detected in stems, leaves, flowers and roots.

Functionally, co-chaperone that regulates diverse cellular pathways, such as programmed cell death and stress responses. Involved in plant basal resistance. Involved in basal heat response through the regulation of the heat induced small HSP (sHSP) transcriptional cascade. Its function is as follows. Induces autophagy. The protein is BAG family molecular chaperone regulator 6 of Arabidopsis thaliana (Mouse-ear cress).